Reading from the N-terminus, the 562-residue chain is MISQVERDLSIQNRLPGSDHTTPSPPTSPHLCRSRSKSSSVSGQQQSRNVAHRLSWIILSVLLRRQGILLFAPIIYISCMLFHLHAASFDASPIIHRRPAPGSVYRSPQVYARLRGEIEADNTTADAISTIWKRSYKGVEWKPCVNMSTGVLPVSNGFIFIEANGGLNQQRTSICNAVAVAGYLNATLVIPNFHYHSIWKDPSKFGDIYDEEYFIDTLANDVRVVDTVPEYLMERFDYNLTNVYNFRVKAWAPTSYYRDSVLPKLLEEKVIRISPFANRLSFDAPRAVQRFRCLANNVALRFSKPILTQGETLVNKMKGLSANNAGKYVSVHLRFEEDMVAFSCCVFDGGDQEKQDMIAARERGWKGKFTKPGRVIRPGANRLNGKCPLTPLEVGLMLRGMGFNKSTYIFLAAGPIYSANRTMAPLLEMFPNLQTKEMLASEEDLAPFKNFSSRMAAIDYTVCLHSEVFVTTQGGNFPHFLMGHRRYLFGGHSKTIQPDKRKLAVLFDNPKLGWKSFKRQMLSMRSHSDSKGFELKRSSDSIYIFPCPDCMCRKNKTTASAT.

The interval 10–46 (SIQNRLPGSDHTTPSPPTSPHLCRSRSKSSSVSGQQQ) is disordered. Residues 37-46 (KSSSVSGQQQ) are compositionally biased toward low complexity. The chain crosses the membrane as a helical; Signal-anchor for type II membrane protein span at residues 67-87 (GILLFAPIIYISCMLFHLHAA). Asn122, Asn146, Asn185, and Asn239 each carry an N-linked (GlcNAc...) asparagine glycan. A substrate-binding site is contributed by 332 to 334 (HLR). 4 N-linked (GlcNAc...) asparagine glycosylation sites follow: Asn404, Asn420, Asn450, and Asn555.

The protein belongs to the glycosyltransferase GT106 family.

The protein resides in the membrane. It participates in glycan metabolism. The protein is O-fucosyltransferase 4 of Arabidopsis thaliana (Mouse-ear cress).